A 158-amino-acid polypeptide reads, in one-letter code: Cyclic pyranopterin monophosphate synthase (158 aa).

Substrate is bound by residues 76–78 (LCH) and 114–115 (ME). The active site involves aspartate 129.

The protein belongs to the MoaC family. In terms of assembly, homohexamer; trimer of dimers.

The catalysed reaction is (8S)-3',8-cyclo-7,8-dihydroguanosine 5'-triphosphate = cyclic pyranopterin phosphate + diphosphate. It functions in the pathway cofactor biosynthesis; molybdopterin biosynthesis. Catalyzes the conversion of (8S)-3',8-cyclo-7,8-dihydroguanosine 5'-triphosphate to cyclic pyranopterin monophosphate (cPMP). The polypeptide is Cyclic pyranopterin monophosphate synthase (Shewanella piezotolerans (strain WP3 / JCM 13877)).